The sequence spans 162 residues: NADH-quinone oxidoreductase subunit I (162 aa).

4Fe-4S ferredoxin-type domains lie at 53 to 83 and 93 to 122; these read LRRY…IESE and TRYD…EGPN. Cys-63, Cys-66, Cys-69, Cys-73, Cys-102, Cys-105, Cys-108, and Cys-112 together coordinate [4Fe-4S] cluster.

This sequence belongs to the complex I 23 kDa subunit family. In terms of assembly, NDH-1 is composed of 14 different subunits. Subunits NuoA, H, J, K, L, M, N constitute the membrane sector of the complex. Requires [4Fe-4S] cluster as cofactor.

It is found in the cell inner membrane. It carries out the reaction a quinone + NADH + 5 H(+)(in) = a quinol + NAD(+) + 4 H(+)(out). In terms of biological role, NDH-1 shuttles electrons from NADH, via FMN and iron-sulfur (Fe-S) centers, to quinones in the respiratory chain. The immediate electron acceptor for the enzyme in this species is believed to be ubiquinone. Couples the redox reaction to proton translocation (for every two electrons transferred, four hydrogen ions are translocated across the cytoplasmic membrane), and thus conserves the redox energy in a proton gradient. The protein is NADH-quinone oxidoreductase subunit I of Erythrobacter litoralis (strain HTCC2594).